The primary structure comprises 283 residues: NifU-like protein 4, mitochondrial (283 aa).

The N-terminal 48 residues, 1-48 (MKGIARLVTSLSRIGGRKVVSGTSTVTSSSSSSLLLSRRSLFISATNL), are a transit peptide targeting the mitochondrion.

Belongs to the NifU family. Predominantly expressed in roots.

It localises to the mitochondrion. Molecular scaffold for [Fe-S] cluster assembly of mitochondrial iron-sulfur proteins. The polypeptide is NifU-like protein 4, mitochondrial (NIFU4) (Arabidopsis thaliana (Mouse-ear cress)).